Here is a 426-residue protein sequence, read N- to C-terminus: 3-phosphoshikimate 1-carboxyvinyltransferase (426 aa).

3-phosphoshikimate is bound by residues K21, S22, and R26. K21 lines the phosphoenolpyruvate pocket. G92 and R122 together coordinate phosphoenolpyruvate. Residues S167, S168, Q169, S195, D315, and K342 each coordinate 3-phosphoshikimate. Residue Q169 coordinates phosphoenolpyruvate. D315 serves as the catalytic Proton acceptor. R346 and R386 together coordinate phosphoenolpyruvate.

It belongs to the EPSP synthase family. As to quaternary structure, monomer.

Its subcellular location is the cytoplasm. The catalysed reaction is 3-phosphoshikimate + phosphoenolpyruvate = 5-O-(1-carboxyvinyl)-3-phosphoshikimate + phosphate. The protein operates within metabolic intermediate biosynthesis; chorismate biosynthesis. Functionally, catalyzes the transfer of the enolpyruvyl moiety of phosphoenolpyruvate (PEP) to the 5-hydroxyl of shikimate-3-phosphate (S3P) to produce enolpyruvyl shikimate-3-phosphate and inorganic phosphate. The sequence is that of 3-phosphoshikimate 1-carboxyvinyltransferase from Methanosphaera stadtmanae (strain ATCC 43021 / DSM 3091 / JCM 11832 / MCB-3).